The primary structure comprises 325 residues: BES1/BZR1 homolog protein 4 (325 aa).

The disordered stretch occupies residues 1 to 21 (MTSGTRMPTWRERENNKRRER). The interval 6–89 (RMPTWREREN…RMEIGGGSAT (84 aa)) is required for DNA-binding. T169 is modified (phosphothreonine). The tract at residues 304 to 325 (ERIHEESGSDDLELTLGNSSTR) is disordered.

This sequence belongs to the BZR/LAT61 family. In terms of processing, phosphorylated. Phosphorylation increases protein degradation.

The protein is BES1/BZR1 homolog protein 4 (BEH4) of Arabidopsis thaliana (Mouse-ear cress).